A 228-amino-acid polypeptide reads, in one-letter code: 2,3-bisphosphoglycerate-dependent phosphoglycerate mutase (228 aa).

Residues 8-15 (RHGQSVWN), 21-22 (SG), arginine 58, 111-114 (ERMY), lysine 122, 138-139 (RR), and 182-183 (GN) each bind substrate. The active-site Tele-phosphohistidine intermediate is the histidine 9. Glutamate 111 (proton donor/acceptor) is an active-site residue.

This sequence belongs to the phosphoglycerate mutase family. BPG-dependent PGAM subfamily.

It catalyses the reaction (2R)-2-phosphoglycerate = (2R)-3-phosphoglycerate. It participates in carbohydrate degradation; glycolysis; pyruvate from D-glyceraldehyde 3-phosphate: step 3/5. Functionally, catalyzes the interconversion of 2-phosphoglycerate and 3-phosphoglycerate. This Chlamydia pneumoniae (Chlamydophila pneumoniae) protein is 2,3-bisphosphoglycerate-dependent phosphoglycerate mutase.